We begin with the raw amino-acid sequence, 336 residues long: Fructose-1,6-bisphosphatase class 1 (336 aa).

Mg(2+)-binding residues include glutamate 90, aspartate 112, leucine 114, and aspartate 115. Substrate is bound by residues 115–118 (DGSS), asparagine 211, and lysine 277. Glutamate 283 contributes to the Mg(2+) binding site.

The protein belongs to the FBPase class 1 family. As to quaternary structure, homotetramer. Mg(2+) is required as a cofactor.

The protein resides in the cytoplasm. It catalyses the reaction beta-D-fructose 1,6-bisphosphate + H2O = beta-D-fructose 6-phosphate + phosphate. It functions in the pathway carbohydrate biosynthesis; gluconeogenesis. This Pseudomonas entomophila (strain L48) protein is Fructose-1,6-bisphosphatase class 1.